We begin with the raw amino-acid sequence, 460 residues long: Phosphomethylpyrimidine synthase (460 aa).

Substrate is bound by residues Asn80, Met109, Tyr139, His175, 195-197 (SRG), 236-239 (DSLR), and Glu275. His279 is a Zn(2+) binding site. Tyr302 is a substrate binding site. His343 contributes to the Zn(2+) binding site. Residues Cys423, Cys426, and Cys431 each contribute to the [4Fe-4S] cluster site.

It belongs to the ThiC family. Requires [4Fe-4S] cluster as cofactor.

The enzyme catalyses 5-amino-1-(5-phospho-beta-D-ribosyl)imidazole + S-adenosyl-L-methionine = 4-amino-2-methyl-5-(phosphooxymethyl)pyrimidine + CO + 5'-deoxyadenosine + formate + L-methionine + 3 H(+). It functions in the pathway cofactor biosynthesis; thiamine diphosphate biosynthesis. Its function is as follows. Catalyzes the synthesis of the hydroxymethylpyrimidine phosphate (HMP-P) moiety of thiamine from aminoimidazole ribotide (AIR) in a radical S-adenosyl-L-methionine (SAM)-dependent reaction. The sequence is that of Phosphomethylpyrimidine synthase from Rippkaea orientalis (strain PCC 8801 / RF-1) (Cyanothece sp. (strain PCC 8801)).